We begin with the raw amino-acid sequence, 482 residues long: Glycogen synthase (482 aa).

Residue Lys15 coordinates ADP-alpha-D-glucose.

It belongs to the glycosyltransferase 1 family. Bacterial/plant glycogen synthase subfamily.

The enzyme catalyses [(1-&gt;4)-alpha-D-glucosyl](n) + ADP-alpha-D-glucose = [(1-&gt;4)-alpha-D-glucosyl](n+1) + ADP + H(+). The protein operates within glycan biosynthesis; glycogen biosynthesis. Synthesizes alpha-1,4-glucan chains using ADP-glucose. The sequence is that of Glycogen synthase from Elusimicrobium minutum (strain Pei191).